A 145-amino-acid polypeptide reads, in one-letter code: MPGYTVKDVNQQEFVKALAAFFKKSGKLKKPDWVDTVKLGKHKELAPFDIDWYYIRTASVARHLYMRGGVGVGAMTKIYGGRQRNGTRPSHYSRGSRNVARKVLQSLEMLKMVEKDPNGGRRLTSIGQRDMDRIAGQVVVLSKKH.

It belongs to the eukaryotic ribosomal protein eS19 family. Component of the small ribosomal subunit.

The protein localises to the cytoplasm. It is found in the nucleus. Its function is as follows. Component of the small ribosomal subunit. The ribosome is a large ribonucleoprotein complex responsible for the synthesis of proteins in the cell. Required for pre-rRNA processing and maturation of 40S ribosomal subunits. The polypeptide is Small ribosomal subunit protein eS19 (rps19) (Myxine glutinosa (Atlantic hagfish)).